Consider the following 303-residue polypeptide: 2-(5''-triphosphoribosyl)-3'-dephosphocoenzyme-A synthase (303 aa).

Belongs to the CitG/MdcB family.

The enzyme catalyses 3'-dephospho-CoA + ATP = 2'-(5''-triphospho-alpha-D-ribosyl)-3'-dephospho-CoA + adenine. Functionally, catalyzes the formation of 2-(5''-triphosphoribosyl)-3'-dephosphocoenzyme-A, the precursor of the prosthetic group of the holo-acyl carrier protein (gamma chain) of citrate lyase, from ATP and dephospho-CoA. This Escherichia fergusonii (strain ATCC 35469 / DSM 13698 / CCUG 18766 / IAM 14443 / JCM 21226 / LMG 7866 / NBRC 102419 / NCTC 12128 / CDC 0568-73) protein is 2-(5''-triphosphoribosyl)-3'-dephosphocoenzyme-A synthase.